We begin with the raw amino-acid sequence, 662 residues long: U6 snRNA-specific terminal uridylyltransferase (662 aa).

Mg(2+)-binding residues include D183 and D185. The region spanning 384–437 (CKFFRELFKYYANFDFTNKAIYGKKAMQKKTLSSAHGGVEESPLMLMDPMDITH) is the PAP-associated domain.

Belongs to the DNA polymerase type-B-like family. As to quaternary structure, forms a complex composed of sart-3, terminal uridylyltransferase usip-1 and U6 snRNA; complex formation is mediated by usip-1 and sart-3 binding to U6 snRNA. It depends on Mg(2+) as a cofactor. The cofactor is Mn(2+). Ubiquitously expressed.

Its subcellular location is the nucleus. The protein localises to the nucleoplasm. The catalysed reaction is RNA(n) + UTP = RNA(n)-3'-uridine ribonucleotide + diphosphate. Functionally, acts as a specific terminal uridylyltransferase for U6 snRNA. Responsible for the addition of UTP at the 3' end of U6 snRNA which stabilizes U6 snRNA. Does not have activity towards modified uridine containing 3'-monophosphorylation or 2'-O-methylation. In Caenorhabditis elegans, this protein is U6 snRNA-specific terminal uridylyltransferase.